The sequence spans 215 residues: Ribulose-phosphate 3-epimerase (215 aa).

S13 lines the substrate pocket. Positions 38, 40, 69, and 175 each coordinate a divalent metal cation. D40 functions as the Proton acceptor in the catalytic mechanism. Substrate is bound by residues H69, D175 to G177, and G196 to S197. Residue D175 is the Proton donor of the active site.

The protein belongs to the ribulose-phosphate 3-epimerase family. A divalent metal cation serves as cofactor.

The catalysed reaction is D-ribulose 5-phosphate = D-xylulose 5-phosphate. The protein operates within carbohydrate degradation. In terms of biological role, catalyzes the reversible epimerization of D-ribulose 5-phosphate to D-xylulose 5-phosphate. In Mycoplasma pneumoniae (strain ATCC 29342 / M129 / Subtype 1) (Mycoplasmoides pneumoniae), this protein is Ribulose-phosphate 3-epimerase.